We begin with the raw amino-acid sequence, 347 residues long: MRIEQDLKLGFKDVLIRPKRSTLKSRSQVDLNRQFTFKHSGKTWSGVPIIAANMDSVASFKMAISLAKHNVMTAVHKHYSVEQWGEFVSSQTADVLKHVMVSSGTSDADFIKLSEILAMSEELNFICIDIANGYSEHLVDYVRKVRQAHPQAVISAGNVVTGDMVEELIIAGADIVKVGIGPGSVCTTRVKTGVGYPQLSAIIECADAAHGLGGQIIGDGGCSCAGDVAKAFGGGADFVMLGGMLAGHEQSGGEVIEQDGKMMVKFYGMSSQSAMDKHSGGVAKYRAAEGKTVLLPFRGSVDNTINDIMGGVRSTCTYVGAASLKELTKRTTFIRVQEQENNVYGKE.

NADP(+) is bound at residue 108–131; that stretch reads ADFIKLSEILAMSEELNFICIDIA. The K(+) site is built by Gly181 and Gly183. Catalysis depends on Cys186, which acts as the Thioimidate intermediate. 216–239 contacts NADP(+); it reads IIGDGGCSCAGDVAKAFGGGADFV.

It belongs to the IMPDH/GMPR family. GuaC type 1 subfamily. As to quaternary structure, homotetramer.

The catalysed reaction is IMP + NH4(+) + NADP(+) = GMP + NADPH + 2 H(+). Functionally, catalyzes the irreversible NADPH-dependent deamination of GMP to IMP. It functions in the conversion of nucleobase, nucleoside and nucleotide derivatives of G to A nucleotides, and in maintaining the intracellular balance of A and G nucleotides. This Shewanella halifaxensis (strain HAW-EB4) protein is GMP reductase.